We begin with the raw amino-acid sequence, 364 residues long: Salivary endonuclease (364 aa).

The first 24 residues, 1–24 (MSSFFLSISPLVLALFHVVVQVCS), serve as a signal peptide directing secretion. An N-linked (GlcNAc...) asparagine glycan is attached at Asn-285.

The protein belongs to the DNA/RNA non-specific endonuclease family. The cofactor is Mg(2+). As to expression, saliva (at protein level). Female salivary gland.

The protein localises to the secreted. Hydrolyzes double-stranded DNA with no sequence specificity. Does not cleave ssDNA and RNA. May facilitate blood meal intake by lowering the local viscosity created by the release of host DNA. This is Salivary endonuclease from Culex quinquefasciatus (Southern house mosquito).